Here is a 349-residue protein sequence, read N- to C-terminus: Phosphoribosylformylglycinamidine cyclo-ligase (349 aa).

This sequence belongs to the AIR synthase family.

The protein resides in the cytoplasm. It catalyses the reaction 2-formamido-N(1)-(5-O-phospho-beta-D-ribosyl)acetamidine + ATP = 5-amino-1-(5-phospho-beta-D-ribosyl)imidazole + ADP + phosphate + H(+). It functions in the pathway purine metabolism; IMP biosynthesis via de novo pathway; 5-amino-1-(5-phospho-D-ribosyl)imidazole from N(2)-formyl-N(1)-(5-phospho-D-ribosyl)glycinamide: step 2/2. This Bordetella avium (strain 197N) protein is Phosphoribosylformylglycinamidine cyclo-ligase.